The following is a 443-amino-acid chain: Xaa-Pro dipeptidase (443 aa).

Residues Asp-246, Asp-257, His-339, Glu-384, and Glu-423 each coordinate Mn(2+).

This sequence belongs to the peptidase M24B family. Bacterial-type prolidase subfamily. Requires Mn(2+) as cofactor.

It catalyses the reaction Xaa-L-Pro dipeptide + H2O = an L-alpha-amino acid + L-proline. Functionally, splits dipeptides with a prolyl residue in the C-terminal position. The sequence is that of Xaa-Pro dipeptidase from Escherichia coli (strain SMS-3-5 / SECEC).